Here is a 400-residue protein sequence, read N- to C-terminus: tRNA-specific 2-thiouridylase MnmA (400 aa).

Residues 19–26 (AMSGGVDS) and leucine 45 contribute to the ATP site. The active-site Nucleophile is the cysteine 113. A disulfide bridge links cysteine 113 with cysteine 210. ATP is bound at residue glycine 137. Residues 160–162 (RDQ) form an interaction with tRNA region. Cysteine 210 (cysteine persulfide intermediate) is an active-site residue.

This sequence belongs to the MnmA/TRMU family.

The protein localises to the cytoplasm. It carries out the reaction S-sulfanyl-L-cysteinyl-[protein] + uridine(34) in tRNA + AH2 + ATP = 2-thiouridine(34) in tRNA + L-cysteinyl-[protein] + A + AMP + diphosphate + H(+). In terms of biological role, catalyzes the 2-thiolation of uridine at the wobble position (U34) of tRNA, leading to the formation of s(2)U34. This is tRNA-specific 2-thiouridylase MnmA from Rhodopseudomonas palustris (strain BisA53).